Consider the following 85-residue polypeptide: Large ribosomal subunit protein bL31B (85 aa).

Belongs to the bacterial ribosomal protein bL31 family. Type B subfamily. As to quaternary structure, part of the 50S ribosomal subunit.

The sequence is that of Large ribosomal subunit protein bL31B from Vibrio cholerae serotype O1 (strain ATCC 39541 / Classical Ogawa 395 / O395).